The following is an 801-amino-acid chain: U-box domain-containing protein 44 (801 aa).

Residues 22–101 enclose the U-box domain; the sequence is HIYEAFICPL…EEWRSRNDAA (80 aa). 9 ARM repeats span residues 134-173, 176-215, 218-259, 261-300, 301-340, 342-386, 390-429, 435-475, and 480-521; these read RSNRHGVRNSQLIHMIIDMLKSTSHRVRYKALQTLQVVVE, DESKAIVAEGDTVRTLVKFLSHEPSKGREAAVSLLFELSK, ALCE…NMER, EEIVRQMASYGRLQPLLGKLLEGSPETKLSMASFLGELPL, NNDVKVLVAQTVGSSLVDLMRSGDMPQREAALKALNKISS, EGSA…NIVN, DFDKATLVSENRVENLLHLISNTGPAIQCKLLEVLVGLTS, PKVV…NLSP, and ELAK…ELPD.

Interacts with AAO3. Binds to SD129. As to expression, expressed in leaves, root vasculature and guard cells.

The catalysed reaction is S-ubiquitinyl-[E2 ubiquitin-conjugating enzyme]-L-cysteine + [acceptor protein]-L-lysine = [E2 ubiquitin-conjugating enzyme]-L-cysteine + N(6)-ubiquitinyl-[acceptor protein]-L-lysine.. It participates in protein modification; protein ubiquitination. Its function is as follows. Functions as an E3 ubiquitin-protein ligase. Prevents premature senescence probably by targeting proteins involved in this process for degradation. Promotes the degradation of AAO3 and thus represses abscisic acid (ABA) biosynthesis. The sequence is that of U-box domain-containing protein 44 (PUB44) from Arabidopsis thaliana (Mouse-ear cress).